The sequence spans 290 residues: Sodium/potassium-transporting ATPase subunit beta-2 (290 aa).

Residues 1–39 (MVIQKEKKSCGQVVEEWKEFVWNPRTHQFMGRTGTSWAF) are Cytoplasmic-facing. The chain crosses the membrane as a helical; Signal-anchor for type II membrane protein span at residues 40–67 (ILLFYLVFYGFLTAMFSLTMWVMLQTVS). Residues 68–290 (DHTPKYQDRL…VAFKLRINKT (223 aa)) lie on the Extracellular side of the membrane. 2 N-linked (GlcNAc...) asparagine glycosylation sites follow: N96 and N118. C129 and C150 are oxidised to a cystine. N153 is a glycosylation site (N-linked (GlcNAc...) asparagine). C160 and C177 form a disulfide bridge. N193, N197, N220, and N238 each carry an N-linked (GlcNAc...) asparagine glycan. An immunoglobulin-like region spans residues 193 to 290 (NQSMNVTCVG…VAFKLRINKT (98 aa)). The cysteines at positions 200 and 261 are disulfide-linked.

Belongs to the X(+)/potassium ATPases subunit beta family. In terms of assembly, the sodium/potassium-transporting ATPase is composed of a catalytic alpha subunit, an auxiliary non-catalytic beta subunit and an additional regulatory subunit. Interacts with isoform 2 of BSG.

It is found in the cell membrane. This is the non-catalytic component of the active enzyme, which catalyzes the hydrolysis of ATP coupled with the exchange of Na(+) and K(+) ions across the plasma membrane. The exact function of the beta-2 subunit is not known. Functionally, mediates cell adhesion of neurons and astrocytes, and promotes neurite outgrowth. This Mus musculus (Mouse) protein is Sodium/potassium-transporting ATPase subunit beta-2 (Atp1b2).